The sequence spans 285 residues: Pantothenate synthetase (285 aa).

Residue Met-30–His-37 coordinates ATP. The Proton donor role is filled by His-37. Residue Gln-61 participates in (R)-pantoate binding. Gln-61 serves as a coordination point for beta-alanine. Gly-148–Asp-151 contributes to the ATP binding site. (R)-pantoate is bound at residue Gln-154. ATP is bound by residues Val-177 and Leu-185–Arg-188.

This sequence belongs to the pantothenate synthetase family. Homodimer.

The protein localises to the cytoplasm. The enzyme catalyses (R)-pantoate + beta-alanine + ATP = (R)-pantothenate + AMP + diphosphate + H(+). It participates in cofactor biosynthesis; (R)-pantothenate biosynthesis; (R)-pantothenate from (R)-pantoate and beta-alanine: step 1/1. In terms of biological role, catalyzes the condensation of pantoate with beta-alanine in an ATP-dependent reaction via a pantoyl-adenylate intermediate. In Leptospira interrogans serogroup Icterohaemorrhagiae serovar Lai (strain 56601), this protein is Pantothenate synthetase.